We begin with the raw amino-acid sequence, 500 residues long: ATP synthase subunit alpha (500 aa).

Residue 169-176 coordinates ATP; the sequence is GDRQTGKT.

It belongs to the ATPase alpha/beta chains family. F-type ATPases have 2 components, CF(1) - the catalytic core - and CF(0) - the membrane proton channel. CF(1) has five subunits: alpha(3), beta(3), gamma(1), delta(1), epsilon(1). CF(0) has three main subunits: a(1), b(2) and c(9-12). The alpha and beta chains form an alternating ring which encloses part of the gamma chain. CF(1) is attached to CF(0) by a central stalk formed by the gamma and epsilon chains, while a peripheral stalk is formed by the delta and b chains.

It is found in the cell membrane. It catalyses the reaction ATP + H2O + 4 H(+)(in) = ADP + phosphate + 5 H(+)(out). Functionally, produces ATP from ADP in the presence of a proton gradient across the membrane. The alpha chain is a regulatory subunit. The chain is ATP synthase subunit alpha from Lactococcus lactis subsp. cremoris (strain MG1363).